The sequence spans 326 residues: RNA/RNP complex-1-interacting phosphatase (326 aa).

Residues 1–28 (MNQWHYGRYSRGRDFTARAPPKKKGKNQ) are disordered. Residues 59–206 (FEAKLMPEEC…LQKRRVRKNQ (148 aa)) form the Tyrosine-protein phosphatase domain. Cys150 functions as the Phosphocysteine intermediate in the catalytic mechanism. A substrate-binding site is contributed by 151-156 (THGLNR). Arg156 serves as the catalytic Proton donor/acceptor. Positions 200–258 (RRVRKNQNASASRSGGLEDSAHLTEQVHTTNKPVNKGPKKSRRGGHLESSQHVQTQSSA) are disordered. A compositionally biased stretch (polar residues) spans 247 to 258 (ESSQHVQTQSSA).

Belongs to the protein-tyrosine phosphatase family. Non-receptor class dual specificity subfamily. In terms of assembly, monomer. May interact with SFRS7 and SFRS9/SRP30C.

It localises to the nucleus. It is found in the nucleus speckle. Possesses RNA 5'-triphosphatase and diphosphatase activities, but displays a poor protein-tyrosine phosphatase activity. In addition, has phosphatase activity with ATP, ADP and O-methylfluorescein phosphate (in vitro). Binds to RNA. May participate in nuclear mRNA metabolism. This Rattus norvegicus (Rat) protein is RNA/RNP complex-1-interacting phosphatase (Dusp11).